Consider the following 689-residue polypeptide: Protein asunder (689 aa).

The stretch at 521-550 (NGARLKLSKAKDQYRLLYRELEQLIQLNAT) forms a coiled coil. 2 disordered regions span residues 591-619 (SPER…SKRR) and 665-689 (GTKD…SVRS). Residues 599-614 (SSVGASGSSNSNSLLK) are compositionally biased toward low complexity. A Nuclear localization signal (NLS) motif is present at residues 613 to 619 (LKASKRR).

This sequence belongs to the Integrator subunit 13 family. As to quaternary structure, belongs to the multiprotein complex Integrator, at least composed of IntS1, IntS2, IntS3, IntS4, omd/IntS5, IntS6, defl/IntS7, IntS8, IntS9, IntS10, IntS11, IntS12, asun/IntS13, IntS14 and IntS15. The core complex associates with protein phosphatase 2A subunits mts/PP2A and Pp2A-29B, to form the Integrator-PP2A (INTAC) complex. Phosphorylated.

The protein localises to the nucleus. It localises to the cytoplasm. The protein resides in the perinuclear region. Functionally, component of the integrator complex, a multiprotein complex that terminates RNA polymerase II (Pol II) transcription in the promoter-proximal region of genes. The integrator complex provides a quality checkpoint during transcription elongation by driving premature transcription termination of transcripts that are unfavorably configured for transcriptional elongation: the complex terminates transcription by (1) catalyzing dephosphorylation of the C-terminal domain (CTD) of Pol II subunit Polr2A/Rbp1 and Spt5, and (2) degrading the exiting nascent RNA transcript via endonuclease activity. The integrator complex is also involved in the 3'-end processing of the U7 snRNA, and also the spliceosomal snRNAs U1, U2, U4 and U5. This chain is Protein asunder (asun), found in Drosophila sechellia (Fruit fly).